We begin with the raw amino-acid sequence, 469 residues long: 3-isopropylmalate dehydratase large subunit (469 aa).

Positions 349, 409, and 412 each coordinate [4Fe-4S] cluster. The disordered stretch occupies residues 424-443; that stretch reads QISASSSNRNFKGRQGSPSG.

This sequence belongs to the aconitase/IPM isomerase family. LeuC type 1 subfamily. As to quaternary structure, heterodimer of LeuC and LeuD. [4Fe-4S] cluster is required as a cofactor.

The catalysed reaction is (2R,3S)-3-isopropylmalate = (2S)-2-isopropylmalate. Its pathway is amino-acid biosynthesis; L-leucine biosynthesis; L-leucine from 3-methyl-2-oxobutanoate: step 2/4. Catalyzes the isomerization between 2-isopropylmalate and 3-isopropylmalate, via the formation of 2-isopropylmaleate. In Thermosynechococcus vestitus (strain NIES-2133 / IAM M-273 / BP-1), this protein is 3-isopropylmalate dehydratase large subunit.